The following is a 410-amino-acid chain: Eukaryotic initiation factor 4A (410 aa).

Residues 37–65 carry the Q motif motif; the sequence is ESFDSMGLQENLLRGIYAYGFEKPSAIQQ. Residues 68 to 238 enclose the Helicase ATP-binding domain; that stretch reads IVPFCKGLDV…RKFMNKPVRI (171 aa). 81-88 provides a ligand contact to ATP; that stretch reads AQSGTGKT. The short motif at 186–189 is the DEAD box element; the sequence is DEAD. Residues 249–410 form the Helicase C-terminal domain; that stretch reads GIKQFYVNID…ELPANVADLL (162 aa).

This sequence belongs to the DEAD box helicase family. eIF4A subfamily. In terms of assembly, eIF4F is a multi-subunit complex, the composition of which varies with external and internal environmental conditions. It is composed of at least EIF4A, EIF4E and EIF4G.

The catalysed reaction is ATP + H2O = ADP + phosphate + H(+). In terms of biological role, ATP-dependent RNA helicase which is a subunit of the eIF4F complex involved in cap recognition and is required for mRNA binding to ribosome. In the current model of translation initiation, eIF4A unwinds RNA secondary structures in the 5'-UTR of mRNAs which is necessary to allow efficient binding of the small ribosomal subunit, and subsequent scanning for the initiator codon. The sequence is that of Eukaryotic initiation factor 4A from Zea mays (Maize).